A 176-amino-acid chain; its full sequence is ATP-dependent protease subunit HslV (176 aa).

Residue Thr-2 is part of the active site. 3 residues coordinate Na(+): Gly-157, Cys-160, and Thr-163.

The protein belongs to the peptidase T1B family. HslV subfamily. As to quaternary structure, a double ring-shaped homohexamer of HslV is capped on each side by a ring-shaped HslU homohexamer. The assembly of the HslU/HslV complex is dependent on binding of ATP.

It is found in the cytoplasm. It catalyses the reaction ATP-dependent cleavage of peptide bonds with broad specificity.. With respect to regulation, allosterically activated by HslU binding. Functionally, protease subunit of a proteasome-like degradation complex believed to be a general protein degrading machinery. This Marinobacter nauticus (strain ATCC 700491 / DSM 11845 / VT8) (Marinobacter aquaeolei) protein is ATP-dependent protease subunit HslV.